Consider the following 500-residue polypeptide: 7-alpha-hydroxycholest-4-en-3-one 12-alpha-hydroxylase (500 aa).

A helical transmembrane segment spans residues 4–24 (WCTVLGALLTVVGCLCLSLLL). Serine 325 bears the Phosphoserine mark. Cysteine 439 is a binding site for heme.

Belongs to the cytochrome P450 family. Heme is required as a cofactor. In terms of tissue distribution, expressed in liver.

Its subcellular location is the endoplasmic reticulum membrane. It localises to the microsome membrane. It carries out the reaction 7alpha-hydroxycholest-4-en-3-one + reduced [NADPH--hemoprotein reductase] + O2 = 7alpha,12alpha-dihydroxycholest-4-en-3-one + oxidized [NADPH--hemoprotein reductase] + H2O + H(+). It catalyses the reaction 5beta-cholestane-3alpha,7alpha-diol + reduced [NADPH--hemoprotein reductase] + O2 = 5beta-cholestane-3alpha,7alpha,12alpha-triol + oxidized [NADPH--hemoprotein reductase] + H2O + H(+). The enzyme catalyses chenodeoxycholate + reduced [NADPH--hemoprotein reductase] + O2 = cholate + oxidized [NADPH--hemoprotein reductase] + H2O + H(+). It participates in lipid metabolism; bile acid biosynthesis. In terms of biological role, a cytochrome P450 monooxygenase involved in primary bile acid biosynthesis. Catalyzes the 12alpha-hydroxylation of 7alpha-hydroxy-4-cholesten-3-one, an intermediate metabolite in cholic acid biosynthesis. Controls biliary balance of cholic acid and chenodeoxycholic acid, ultimately regulating the intestinal absorption of dietary lipids. Mechanistically, uses molecular oxygen inserting one oxygen atom into a substrate, and reducing the second into a water molecule, with two electrons provided by NADPH via cytochrome P450 reductase (CPR; NADPH--hemoprotein reductase). The polypeptide is 7-alpha-hydroxycholest-4-en-3-one 12-alpha-hydroxylase (Cyp8b1) (Mus musculus (Mouse)).